We begin with the raw amino-acid sequence, 402 residues long: Apolipoprotein L3 (402 aa).

Belongs to the apolipoprotein L family. Widely expressed; the highest levels are in prostate, lung and placenta; also detected in kidney, bone marrow, spleen, thymus, spinal cord, adrenal gland, salivary gland, trachea and mammary gland; levels are low in brain, heart, fetal liver, pancreas and testis.

The protein localises to the cytoplasm. Functionally, may affect the movement of lipids in the cytoplasm or allow the binding of lipids to organelles. This Homo sapiens (Human) protein is Apolipoprotein L3 (APOL3).